A 363-amino-acid chain; its full sequence is Heat-inducible transcription repressor HrcA (363 aa).

It belongs to the HrcA family.

In terms of biological role, negative regulator of class I heat shock genes (grpE-dnaK-dnaJ and groELS operons). Prevents heat-shock induction of these operons. The chain is Heat-inducible transcription repressor HrcA from Afipia carboxidovorans (strain ATCC 49405 / DSM 1227 / KCTC 32145 / OM5) (Oligotropha carboxidovorans).